Reading from the N-terminus, the 249-residue chain is uncharacterized protein (249 aa).

Composition is skewed to polar residues over residues 66–79 and 92–119; these read NASL…TISP and ASGS…SSSE. Positions 66-142 are disordered; that stretch reads NASLESGQSS…GPTSPRVTPG (77 aa).

Its subcellular location is the plastid. It is found in the chloroplast. This is an uncharacterized protein from Chlorella vulgaris (Green alga).